The primary structure comprises 198 residues: dITP/XTP pyrophosphatase (198 aa).

7-12 is a substrate binding site; it reads THNPHK. Positions 40 and 69 each coordinate Mg(2+). Asp-69 functions as the Proton acceptor in the catalytic mechanism. Substrate-binding positions include Thr-70, 151-154, Lys-174, and 179-180; these read FGYD and HR.

It belongs to the HAM1 NTPase family. As to quaternary structure, homodimer. Requires Mg(2+) as cofactor.

The catalysed reaction is XTP + H2O = XMP + diphosphate + H(+). It catalyses the reaction dITP + H2O = dIMP + diphosphate + H(+). It carries out the reaction ITP + H2O = IMP + diphosphate + H(+). Pyrophosphatase that catalyzes the hydrolysis of nucleoside triphosphates to their monophosphate derivatives, with a high preference for the non-canonical purine nucleotides XTP (xanthosine triphosphate), dITP (deoxyinosine triphosphate) and ITP. Seems to function as a house-cleaning enzyme that removes non-canonical purine nucleotides from the nucleotide pool, thus preventing their incorporation into DNA/RNA and avoiding chromosomal lesions. This is dITP/XTP pyrophosphatase from Thermoanaerobacter pseudethanolicus (strain ATCC 33223 / 39E) (Clostridium thermohydrosulfuricum).